The chain runs to 287 residues: Bifunctional protein FolD (287 aa).

NADP(+)-binding positions include Gly169–Ser171 and Ser194.

The protein belongs to the tetrahydrofolate dehydrogenase/cyclohydrolase family. As to quaternary structure, homodimer.

It carries out the reaction (6R)-5,10-methylene-5,6,7,8-tetrahydrofolate + NADP(+) = (6R)-5,10-methenyltetrahydrofolate + NADPH. The catalysed reaction is (6R)-5,10-methenyltetrahydrofolate + H2O = (6R)-10-formyltetrahydrofolate + H(+). It functions in the pathway one-carbon metabolism; tetrahydrofolate interconversion. Catalyzes the oxidation of 5,10-methylenetetrahydrofolate to 5,10-methenyltetrahydrofolate and then the hydrolysis of 5,10-methenyltetrahydrofolate to 10-formyltetrahydrofolate. The protein is Bifunctional protein FolD of Albidiferax ferrireducens (strain ATCC BAA-621 / DSM 15236 / T118) (Rhodoferax ferrireducens).